Here is a 1355-residue protein sequence, read N- to C-terminus: MNDDRETPPKRKPGEDDTLFDIDFLDDTTSHSGSRSKVTNSHANANYIPPSHVLPEETIDLDADDDNIENDVHENLFMSNNHDDQTSWNANRFDSDAYQPQSLRAVKPPGLFARFGNGLKNAFTFKRKKGPESFEMNHYNAVTNNELDDNYLDSRNKFNIKILFNRYILRKNVGDAEGNGEPRVIHINDSLANSSFGYSDNHISTTKYNFATFLPKFLFQEFSKYANLFFLCTSAIQQVPHVSPTNRYTTIGTLLVVLIVSAMKECIEDIKRANSDKELNNSTAEIFSEAHDDFVEKRWIDIRVGDIIRVKSEEPIPADTIILSSSEPEGLCYIETANLDGETNLKIKQSRVETAKFIDVKTLKNMNGKVVSEQPNSSLYTYEGTMTLNDRQIPLSPDQMILRGATLRNTAWIFGLVIFTGHETKLLRNATATPIKRTAVEKIINRQIIALFTVLIVLILISSIGNVIMSTADAKHLSYLYLEGTNKAGLFFKDFLTFWILFSNLVPISLFVTVELIKYYQAFMIGSDLDLYYEKTDTPTVVRTSSLVEELGQIEYIFSDKTGTLTRNIMEFKSCSIAGHCYIDKIPEDKTATVEDGIEVGYRKFDDLKKKLNDPSDEDSPIINDFLTLLATCHTVIPEFQSDGSIKYQAASPDEGALVQGGADLGYKFIIRKPNSVTVLLEETGEEKEYQLLNICEFNSTRKRMSAIFRFPDGSIKLFCKGADTVILERLDDEANQYVEATMRHLEDYASEGLRTLCLAMRDISEGEYEEWNSIYNEAATTLDNRAEKLDEAANLIEKNLILIGATAIEDKLQDGVPETIHTLQEAGIKIWVLTGDRQETAINIGMSCRLLSEDMNLLIINEETRDDTERNLLEKINALNEHQLSTHDMNTLALVIDGKSLGFALEPELEDYLLTVAKLCKAVICCRVSPLQKALVVKMVKRKSSSLLLAIGDGANDVSMIQAAHVGVGISGMEGMQAARSADIAVGQFKFLKKLLLVHGSWSYQRISVAILYSFYKNTALYMTQFWYVFANAFSGQSIMESWTMSFYNLFFTVWPPFVIGVFDQFVSSRLLERYPQLYKLGQKGQFFSVYIFWGWIINGFFHSAIVFIGTILIYRYGFALNMHGELADHWSWGVTVYTTSVIIVLGKAALVTNQWTKFTLIAIPGSLLFWLIFFPIYASIFPHANISREYYGVVKHTYGSGVFWLTLIVLPIFALVRDFLWKYYKRMYEPETYHVIQEMQKYNISDSRPHVQQFQNAIRKVRQVQRMKKQRGFAFSQAEEGGQEKIVRMYDTTQKRGKYGELQDASANPFNDNNGLGSNDFESAEPFIENPFADGNQNSNRFSSSRDDISFDI.

Basic and acidic residues predominate over residues 1–15; the sequence is MNDDRETPPKRKPGE. Residues 1–50 are disordered; that stretch reads MNDDRETPPKRKPGEDDTLFDIDFLDDTTSHSGSRSKVTNSHANANYIPP. The segment at 1-104 is involved in autoinhibition; that stretch reads MNDDRETPPK…SDAYQPQSLR (104 aa). Over 1–221 the chain is Cytoplasmic; that stretch reads MNDDRETPPK…TFLPKFLFQE (221 aa). The span at 16-26 shows a compositional bias: acidic residues; the sequence is DDTLFDIDFLD. The segment covering 30–44 has biased composition (polar residues); it reads SHSGSRSKVTNSHAN. Position 102 is a phosphoserine (Ser-102). The helical transmembrane segment at 222–242 threads the bilayer; sequence FSKYANLFFLCTSAIQQVPHV. The interval 237 to 238 is involved in phosphatidylserine substrate recognition; it reads QQ. The Lumenal portion of the chain corresponds to 243-246; that stretch reads SPTN. The chain crosses the membrane as a helical span at residues 247 to 267; the sequence is RYTTIGTLLVVLIVSAMKECI. Topologically, residues 268–449 are cytoplasmic; it reads EDIKRANSDK…VEKIINRQII (182 aa). A helical membrane pass occupies residues 450 to 470; it reads ALFTVLIVLILISSIGNVIMS. Topologically, residues 471 to 490 are lumenal; the sequence is TADAKHLSYLYLEGTNKAGL. The helical transmembrane segment at 491–511 threads the bilayer; sequence FFKDFLTFWILFSNLVPISLF. The Cytoplasmic portion of the chain corresponds to 512-1012; it reads VTVELIKYYQ…WSYQRISVAI (501 aa). Asp-560 functions as the 4-aspartylphosphate intermediate in the catalytic mechanism. 15 residues coordinate ATP: Asp-560, Lys-561, Thr-562, Glu-655, Phe-698, Ser-700, Lys-703, Lys-721, Arg-755, Thr-756, Thr-835, Gly-836, Asp-837, Arg-928, and Lys-934. Mg(2+) is bound at residue Asp-560. Thr-562 provides a ligand contact to Mg(2+). Asp-954 is a Mg(2+) binding site. ATP is bound by residues Asn-957 and Asp-958. Mg(2+) is bound at residue Asp-958. Residues 1013 to 1033 form a helical membrane-spanning segment; sequence LYSFYKNTALYMTQFWYVFAN. Topologically, residues 1034-1043 are lumenal; it reads AFSGQSIMES. Residues 1044 to 1064 traverse the membrane as a helical segment; sequence WTMSFYNLFFTVWPPFVIGVF. The Cytoplasmic segment spans residues 1065–1094; it reads DQFVSSRLLERYPQLYKLGQKGQFFSVYIF. A helical membrane pass occupies residues 1095–1115; the sequence is WGWIINGFFHSAIVFIGTILI. The Lumenal portion of the chain corresponds to 1116–1131; that stretch reads YRYGFALNMHGELADH. The chain crosses the membrane as a helical span at residues 1132-1152; sequence WSWGVTVYTTSVIIVLGKAAL. An a 1,2-diacyl-sn-glycero-3-phospho-(1D-myo-inositol 4-phosphate)-binding site is contributed by Lys-1149. The Cytoplasmic segment spans residues 1153–1161; that stretch reads VTNQWTKFT. The chain crosses the membrane as a helical span at residues 1162–1182; that stretch reads LIAIPGSLLFWLIFFPIYASI. Over 1183-1202 the chain is Lumenal; that stretch reads FPHANISREYYGVVKHTYGS. A helical membrane pass occupies residues 1203–1223; sequence GVFWLTLIVLPIFALVRDFLW. A 1,2-diacyl-sn-glycero-3-phospho-(1D-myo-inositol 4-phosphate) is bound by residues Arg-1219, Trp-1223, Lys-1224, Tyr-1235, and His-1236. At 1224-1355 the chain is on the cytoplasmic side; that stretch reads KYYKRMYEPE…SSRDDISFDI (132 aa). The tract at residues 1230-1282 is interaction with GEA2; sequence YEPETYHVIQEMQKYNISDSRPHVQQFQNAIRKVRQVQRMKKQRGFAFSQAEE. The interval 1231–1309 is involved in autoinhibition; the sequence is EPETYHVIQE…KYGELQDASA (79 aa). The disordered stretch occupies residues 1305-1355; that stretch reads QDASANPFNDNNGLGSNDFESAEPFIENPFADGNQNSNRFSSSRDDISFDI. Polar residues predominate over residues 1307–1323; it reads ASANPFNDNNGLGSNDF. Over residues 1346–1355 the composition is skewed to basic and acidic residues; it reads SSRDDISFDI.

Belongs to the cation transport ATPase (P-type) (TC 3.A.3) family. Type IV subfamily. In terms of assembly, component of a flippase complex consisting of DRS2 and CDC50. Interacts with CDC50; the interaction is direct, is required for their mutual export from the endoplasmic reticulum, and preferentially occurs when DRS2 is in the E2P state. Interacts (via C-terminus) with GEA2 (via SEC7 domain); the interaction is direct. Interacts with GEA1. Requires Mg(2+) as cofactor.

It localises to the golgi apparatus. It is found in the trans-Golgi network membrane. The protein localises to the endosome membrane. The catalysed reaction is ATP + H2O + phospholipidSide 1 = ADP + phosphate + phospholipidSide 2.. The enzyme catalyses a 1,2-diacyl-sn-glycero-3-phospho-L-serine(out) + ATP + H2O = a 1,2-diacyl-sn-glycero-3-phospho-L-serine(in) + ADP + phosphate + H(+). It carries out the reaction a 1,2-diacyl-sn-glycero-3-phosphoethanolamine(out) + ATP + H2O = a 1,2-diacyl-sn-glycero-3-phosphoethanolamine(in) + ADP + phosphate + H(+). Allosterically activated by binding 1,2-diacyl-sn-glycero-3-phospho-(1D-myo-inositol 4-phosphate) (phosphatidylinositol 4-phosphate). Inhibited by orthovanadate, N-ethylmaleimide, trifluoroberyllate and tetrafluoroaluminate; orthovanadate and N-ethylmaleimide inhibit phosphorylation of the active site aspartic acid. The ATPase activity is not potently stimulated by phosphatidylinositol 3-phosphate and phosphatidylinositol 5-phosphate, phosphatidylinositol 4,5-bisphosphate or phosphatidylcholine. Not inhibited by azide. Catalytic component of a P4-ATPase flippase complex which catalyzes the hydrolysis of ATP coupled to the transport of phosphatidylserine and small amounts of ethanolamine from the lumen to the cytosolic leaflet of the trans-Golgi network and ensures the maintenance of asymmetric distribution of phospholipids. Contributes to clathrin-coated vesicle formation, endocytosis, and protein trafficking between the Golgi and endosomal system. Does not appear to transport phosphatidylcholine or sphingomyelin. The polypeptide is Phospholipid-transporting ATPase DRS2 (Saccharomyces cerevisiae (strain ATCC 204508 / S288c) (Baker's yeast)).